Reading from the N-terminus, the 145-residue chain is Ribonuclease H (145 aa).

An RNase H type-1 domain is found at 1–142 (MKEVVIYTDG…CDEIARSMIK (142 aa)). Residues D9, E47, D69, and D134 each contribute to the Mg(2+) site.

This sequence belongs to the RNase H family. As to quaternary structure, monomer. The cofactor is Mg(2+).

It is found in the cytoplasm. The enzyme catalyses Endonucleolytic cleavage to 5'-phosphomonoester.. Functionally, endonuclease that specifically degrades the RNA of RNA-DNA hybrids. The polypeptide is Ribonuclease H (Caldicellulosiruptor saccharolyticus (strain ATCC 43494 / DSM 8903 / Tp8T 6331)).